The primary structure comprises 299 residues: Phosphoribosylaminoimidazole-succinocarboxamide synthase (299 aa).

This sequence belongs to the SAICAR synthetase family.

It catalyses the reaction 5-amino-1-(5-phospho-D-ribosyl)imidazole-4-carboxylate + L-aspartate + ATP = (2S)-2-[5-amino-1-(5-phospho-beta-D-ribosyl)imidazole-4-carboxamido]succinate + ADP + phosphate + 2 H(+). Its pathway is purine metabolism; IMP biosynthesis via de novo pathway; 5-amino-1-(5-phospho-D-ribosyl)imidazole-4-carboxamide from 5-amino-1-(5-phospho-D-ribosyl)imidazole-4-carboxylate: step 1/2. In Schizosaccharomyces pombe (strain 972 / ATCC 24843) (Fission yeast), this protein is Phosphoribosylaminoimidazole-succinocarboxamide synthase (ade7).